A 377-amino-acid polypeptide reads, in one-letter code: Succinyl-diaminopimelate desuccinylase (377 aa).

His-75 is a binding site for Zn(2+). Asp-77 is a catalytic residue. Asp-106 lines the Zn(2+) pocket. The Proton acceptor role is filled by Glu-136. The Zn(2+) site is built by Glu-137, Glu-165, and His-350.

It belongs to the peptidase M20A family. DapE subfamily. As to quaternary structure, homodimer. Requires Zn(2+) as cofactor. Co(2+) serves as cofactor.

The catalysed reaction is N-succinyl-(2S,6S)-2,6-diaminopimelate + H2O = (2S,6S)-2,6-diaminopimelate + succinate. It participates in amino-acid biosynthesis; L-lysine biosynthesis via DAP pathway; LL-2,6-diaminopimelate from (S)-tetrahydrodipicolinate (succinylase route): step 3/3. Functionally, catalyzes the hydrolysis of N-succinyl-L,L-diaminopimelic acid (SDAP), forming succinate and LL-2,6-diaminopimelate (DAP), an intermediate involved in the bacterial biosynthesis of lysine and meso-diaminopimelic acid, an essential component of bacterial cell walls. The polypeptide is Succinyl-diaminopimelate desuccinylase (Sphingopyxis alaskensis (strain DSM 13593 / LMG 18877 / RB2256) (Sphingomonas alaskensis)).